The following is a 373-amino-acid chain: Queuine tRNA-ribosyltransferase (373 aa).

Asp-89 functions as the Proton acceptor in the catalytic mechanism. Residues 89 to 93 (DSGGF), Asp-143, Gln-192, and Gly-220 contribute to the substrate site. Positions 251 to 257 (GVGTPED) are RNA binding. Asp-270 serves as the catalytic Nucleophile. Residues 275-279 (TRNAR) form an RNA binding; important for wobble base 34 recognition region. Positions 308, 310, 313, and 339 each coordinate Zn(2+).

The protein belongs to the queuine tRNA-ribosyltransferase family. In terms of assembly, homodimer. Within each dimer, one monomer is responsible for RNA recognition and catalysis, while the other monomer binds to the replacement base PreQ1. Requires Zn(2+) as cofactor.

It carries out the reaction 7-aminomethyl-7-carbaguanine + guanosine(34) in tRNA = 7-aminomethyl-7-carbaguanosine(34) in tRNA + guanine. It participates in tRNA modification; tRNA-queuosine biosynthesis. Catalyzes the base-exchange of a guanine (G) residue with the queuine precursor 7-aminomethyl-7-deazaguanine (PreQ1) at position 34 (anticodon wobble position) in tRNAs with GU(N) anticodons (tRNA-Asp, -Asn, -His and -Tyr). Catalysis occurs through a double-displacement mechanism. The nucleophile active site attacks the C1' of nucleotide 34 to detach the guanine base from the RNA, forming a covalent enzyme-RNA intermediate. The proton acceptor active site deprotonates the incoming PreQ1, allowing a nucleophilic attack on the C1' of the ribose to form the product. After dissociation, two additional enzymatic reactions on the tRNA convert PreQ1 to queuine (Q), resulting in the hypermodified nucleoside queuosine (7-(((4,5-cis-dihydroxy-2-cyclopenten-1-yl)amino)methyl)-7-deazaguanosine). The sequence is that of Queuine tRNA-ribosyltransferase from Aliarcobacter butzleri (strain RM4018) (Arcobacter butzleri).